Here is a 272-residue protein sequence, read N- to C-terminus: Type III pantothenate kinase (272 aa).

Position 6–13 (6–13 (DVRNTHTV)) interacts with ATP. 109-112 (GADR) contacts substrate. Asp-111 (proton acceptor) is an active-site residue. Asp-131 provides a ligand contact to K(+). Residue Ser-134 participates in ATP binding. Thr-186 is a substrate binding site.

The protein belongs to the type III pantothenate kinase family. In terms of assembly, homodimer. The cofactor is NH4(+). It depends on K(+) as a cofactor.

The protein resides in the cytoplasm. The catalysed reaction is (R)-pantothenate + ATP = (R)-4'-phosphopantothenate + ADP + H(+). The protein operates within cofactor biosynthesis; coenzyme A biosynthesis; CoA from (R)-pantothenate: step 1/5. Functionally, catalyzes the phosphorylation of pantothenate (Pan), the first step in CoA biosynthesis. This chain is Type III pantothenate kinase, found in Mycobacterium marinum (strain ATCC BAA-535 / M).